A 277-amino-acid chain; its full sequence is Large ribosomal subunit protein mL46 (277 aa).

Lys-228 is modified (N6-acetyllysine).

Belongs to the mitochondrion-specific ribosomal protein mL46 family. In terms of assembly, component of the mitochondrial ribosome large subunit (39S) which comprises a 16S rRNA and about 50 distinct proteins.

Its subcellular location is the mitochondrion. The sequence is that of Large ribosomal subunit protein mL46 (MRPL46) from Bos taurus (Bovine).